We begin with the raw amino-acid sequence, 194 residues long: Phosphoheptose isomerase (194 aa).

The region spanning 37-194 (IADTFKAGGK…LIEKEMVAQG (158 aa)) is the SIS domain. Residue 52–54 (NGG) coordinates substrate. Zn(2+)-binding residues include His61 and Glu65. Substrate-binding positions include Glu65, 93–94 (ND), 119–121 (STS), Ser124, and Gln172. Zn(2+) contacts are provided by Gln172 and His180.

Belongs to the SIS family. GmhA subfamily. In terms of assembly, homotetramer. It depends on Zn(2+) as a cofactor.

It localises to the cytoplasm. The enzyme catalyses 2 D-sedoheptulose 7-phosphate = D-glycero-alpha-D-manno-heptose 7-phosphate + D-glycero-beta-D-manno-heptose 7-phosphate. Its pathway is carbohydrate biosynthesis; D-glycero-D-manno-heptose 7-phosphate biosynthesis; D-glycero-alpha-D-manno-heptose 7-phosphate and D-glycero-beta-D-manno-heptose 7-phosphate from sedoheptulose 7-phosphate: step 1/1. In terms of biological role, catalyzes the isomerization of sedoheptulose 7-phosphate in D-glycero-D-manno-heptose 7-phosphate. The polypeptide is Phosphoheptose isomerase (Sodalis glossinidius (strain morsitans)).